The following is a 229-amino-acid chain: Ribonuclease 3 (229 aa).

One can recognise an RNase III domain in the interval 5–127 (LAGLERKLGY…LIGAIYLDAD (123 aa)). Glutamate 40 is a Mg(2+) binding site. Residue aspartate 44 is part of the active site. The Mg(2+) site is built by aspartate 113 and glutamate 116. Glutamate 116 is a catalytic residue. In terms of domain architecture, DRBM spans 154–224 (DPKTRLQEFL…AASALIALGV (71 aa)).

This sequence belongs to the ribonuclease III family. In terms of assembly, homodimer. The cofactor is Mg(2+).

The protein resides in the cytoplasm. The enzyme catalyses Endonucleolytic cleavage to 5'-phosphomonoester.. Its function is as follows. Digests double-stranded RNA. Involved in the processing of primary rRNA transcript to yield the immediate precursors to the large and small rRNAs (23S and 16S). Processes some mRNAs, and tRNAs when they are encoded in the rRNA operon. Processes pre-crRNA and tracrRNA of type II CRISPR loci if present in the organism. The protein is Ribonuclease 3 of Pseudomonas putida (strain ATCC 700007 / DSM 6899 / JCM 31910 / BCRC 17059 / LMG 24140 / F1).